A 127-amino-acid chain; its full sequence is UPF0325 protein VV1_1856 (127 aa).

This sequence belongs to the UPF0325 family.

The protein is UPF0325 protein VV1_1856 of Vibrio vulnificus (strain CMCP6).